Here is a 144-residue protein sequence, read N- to C-terminus: Grifin (144 aa).

The region spanning 5 to 133 is the Galectin domain; the sequence is SKAFCAGGLA…DHCLAQVELA (129 aa). Serine 138 carries the post-translational modification Phosphoserine.

Homodimer. As to expression, not detected in lens.

This Homo sapiens (Human) protein is Grifin (GRIFIN).